Reading from the N-terminus, the 616-residue chain is Chaperone protein HscA (616 aa).

Belongs to the heat shock protein 70 family.

Functionally, chaperone involved in the maturation of iron-sulfur cluster-containing proteins. Has a low intrinsic ATPase activity which is markedly stimulated by HscB. Involved in the maturation of IscU. The polypeptide is Chaperone protein HscA (Salmonella typhimurium (strain LT2 / SGSC1412 / ATCC 700720)).